A 119-amino-acid chain; its full sequence is Large ribosomal subunit protein bL20 (119 aa).

It belongs to the bacterial ribosomal protein bL20 family.

Its function is as follows. Binds directly to 23S ribosomal RNA and is necessary for the in vitro assembly process of the 50S ribosomal subunit. It is not involved in the protein synthesizing functions of that subunit. The protein is Large ribosomal subunit protein bL20 of Clostridium acetobutylicum (strain ATCC 824 / DSM 792 / JCM 1419 / IAM 19013 / LMG 5710 / NBRC 13948 / NRRL B-527 / VKM B-1787 / 2291 / W).